Here is a 235-residue protein sequence, read N- to C-terminus: Large ribosomal subunit protein uL1c (235 aa).

Belongs to the universal ribosomal protein uL1 family. Part of the 50S ribosomal subunit.

It localises to the plastid. The protein localises to the chloroplast. Binds directly to 23S rRNA. Might be involved in E site tRNA release (Potential). The protein is Large ribosomal subunit protein uL1c (rpl1) of Gracilaria tenuistipitata var. liui (Red alga).